A 131-amino-acid polypeptide reads, in one-letter code: MAFTRSIALFAGLALAASSAQEATILGGYTQKNATSDDIELLTQATSSANMYNKNVDTRICLIAIENLETQTVAGTNYKFQVAGCPVETDDELGACDDRNCDYSSYNIVIFSQPWSDTIEVTSITPAEYQG.

Residues 1–20 form the signal peptide; sequence MAFTRSIALFAGLALAASSA. A glycan (N-linked (GlcNAc...) asparagine) is linked at Asn-33. Residues 71–75 carry the Secondary area of contact motif; that stretch reads QTVAG.

The protein belongs to the cystatin family.

Its subcellular location is the secreted. Its function is as follows. Secreted effector that interacts with and inhibits host apoplastic pathogenesis-related papain-like cysteine proteases. Inhibition of host proteases by a pathogen extracellular protease inhibitor forms a specific type of defense-counterdefense mechanism between plants and microbial pathogens. This is Cystatin-like cysteine protease inhibitor EPIC3 from Phytophthora infestans (Potato late blight agent).